Reading from the N-terminus, the 373-residue chain is Sodium-dependent organic anion transporter (373 aa).

Residues Met1–Ser15 show a composition bias toward polar residues. The disordered stretch occupies residues Met1–Pro21. Over Met1–Leu32 the chain is Extracellular. Asn8 and Asn14 each carry an N-linked (GlcNAc...) asparagine glycan. A helical transmembrane segment spans residues Leu33 to Val53. Residues Glu54 to Gly67 lie on the Cytoplasmic side of the membrane. A helical transmembrane segment spans residues Ile68–Ile88. Over Gly89–Ala97 the chain is Extracellular. A helical membrane pass occupies residues Ile98–Trp118. At Val119–Ser126 the chain is on the cytoplasmic side. A helical membrane pass occupies residues Ile127 to Ile147. The Extracellular portion of the chain corresponds to Tyr148–Asn157. The helical transmembrane segment at Leu158–Ser178 threads the bilayer. Residues Gly179–Lys195 lie on the Cytoplasmic side of the membrane. Residues Val196–Ala216 traverse the membrane as a helical segment. Residues Lys217–Thr224 are Extracellular-facing. Residues Leu225–Phe245 traverse the membrane as a helical segment. Residues Leu246 to Asn265 lie on the Cytoplasmic side of the membrane. A helical membrane pass occupies residues Ile266–Val283. A topological domain (extracellular) is located at residue Gln284. Residues Leu285–Ala305 traverse the membrane as a helical segment. The Cytoplasmic segment spans residues Ala306 to Glu373.

Belongs to the bile acid:sodium symporter (BASS) (TC 2.A.28) family. Post-translationally, glycosylated. Highest expression in lung and testis, moderate expression in heart, bladder and skin, and low expression in blood, liver, stomach, small intestine, spleen, kidney, adrenal gland, seminal vesicle, preputial gland, coagulating gland, lacrimal gland/eye, and brain.

The protein localises to the membrane. The catalysed reaction is estrone 3-sulfate(out) + 2 Na(+)(out) = estrone 3-sulfate(in) + 2 Na(+)(in). It catalyses the reaction 17beta-estradiol 3-sulfate(out) + 2 Na(+)(out) = 17beta-estradiol 3-sulfate(in) + 2 Na(+)(in). The enzyme catalyses dehydroepiandrosterone 3-sulfate(out) + 2 Na(+)(out) = dehydroepiandrosterone 3-sulfate(in) + 2 Na(+)(in). It carries out the reaction androst-5-ene-diol 3-sulfate(out) + 2 Na(+)(out) = androst-5-ene-diol 3-sulfate(in) + 2 Na(+)(in). The catalysed reaction is pregnenolone sulfate(out) + 2 Na(+)(out) = pregnenolone sulfate(in) + 2 Na(+)(in). It catalyses the reaction taurolithocholate 3-sulfate(out) + 2 Na(+)(out) = taurolithocholate 3-sulfate(in) + 2 Na(+)(in). The enzyme catalyses androsterone 3alpha-sulfate(out) + 2 Na(+)(out) = androsterone 3alpha-sulfate(in) + 2 Na(+)(in). It carries out the reaction 5alpha-dihydrotestosterone sulfate(out) + 2 Na(+)(out) = 5alpha-dihydrotestosterone sulfate(in) + 2 Na(+)(in). The catalysed reaction is 17beta-estradiol 17-sulfate(out) + 2 Na(+)(out) = 17beta-estradiol 17-sulfate(in) + 2 Na(+)(in). It catalyses the reaction 17alpha-hydroxypregnenolone 3-sulfate(out) + 2 Na(+)(out) = 17alpha-hydroxypregnenolone 3-sulfate(in) + 2 Na(+)(in). The enzyme catalyses epiandrosterone 3-sulfate(out) + 2 Na(+)(out) = epiandrosterone 3-sulfate(in) + 2 Na(+)(in). It carries out the reaction epitestosterone 17-sulfate(out) + 2 Na(+)(out) = epitestosterone 17-sulfate(in) + 2 Na(+)(in). The catalysed reaction is testosterone 17-sulfate(out) + 2 Na(+)(out) = testosterone 17-sulfate(in) + 2 Na(+)(in). It catalyses the reaction 16alpha-hydroxydehydroepiandrosterone 3-sulfate(out) + 2 Na(+)(out) = 16alpha-hydroxydehydroepiandrosterone 3-sulfate(in) + 2 Na(+)(in). In terms of biological role, transports sulfoconjugated steroid hormones from the extracellular compartment into the cytosol in a sodium-dependent manner without hydrolysis. Steroid sulfate hormones are commonly considered to be biologically inactive metabolites, that may be activated by steroid sulfatases into free steroids. May play an important role by delivering sulfoconjugated steroids to specific target cells in reproductive organs. May play a role transporting the estriol precursor 16alpha-hydroxydehydroepiandrosterone 3-sulfate (16a-OH-DHEAS) at the fetal blood vessel endothelium. Can also transport other sulfoconjugated molecules such as taurolithocholic acid-3-sulfate and sulfoconjugated pyrenes. In Mus musculus (Mouse), this protein is Sodium-dependent organic anion transporter (Slc10a6).